We begin with the raw amino-acid sequence, 141 residues long: Hemoglobin subunit alpha-A (141 aa).

The Globin domain maps to 1 to 141 (VLSAADKNNV…VGTVLTAKYR (141 aa)). Position 58 (H58) interacts with O2. Residue H87 coordinates heme b.

It belongs to the globin family. Heterotetramer of two alpha chains and two beta chains. As to expression, red blood cells.

In terms of biological role, involved in oxygen transport from the lung to the various peripheral tissues. The polypeptide is Hemoglobin subunit alpha-A (HBAA) (Phasianus colchicus colchicus (Black-necked pheasant)).